Here is a 443-residue protein sequence, read N- to C-terminus: Nitrate/nitrite binding protein NrtA (443 aa).

An N-terminal signal peptide occupies residues 1-25; the sequence is MSQFSRRKFLLTAGGTAAAALWLNA. Residue C26 is the site of N-palmitoyl cysteine attachment. The S-diacylglycerol cysteine moiety is linked to residue C26. Residues 31 to 46 are compositionally biased toward low complexity; the sequence is SSTDTTGSTSTPAPSG. The disordered stretch occupies residues 31 to 52; sequence SSTDTTGSTSTPAPSGTSGGDA. 5 residues coordinate nitrate: W96, Q150, H195, G239, and K268.

This sequence belongs to the CmpA/NrtA family. As to quaternary structure, the complex is composed of two ATP-binding proteins (NrtC and NrtD), two transmembrane proteins (NrtB) and a solute-binding protein (NrtA). NrtA can form homotrimers. Post-translationally, the N-terminus is blocked.

The protein resides in the cell inner membrane. In terms of biological role, part of the ABC transporter complex NrtABCD involved in nitrate uptake. The complex is probably also involved in nitrite transport. NrtA is the substrate-binding protein. Binds both nitrate and nitrite with high affinity. This Synechococcus elongatus (strain ATCC 33912 / PCC 7942 / FACHB-805) (Anacystis nidulans R2) protein is Nitrate/nitrite binding protein NrtA.